Reading from the N-terminus, the 94-residue chain is Small ribosomal subunit protein uS19 (94 aa).

It belongs to the universal ribosomal protein uS19 family.

Functionally, protein S19 forms a complex with S13 that binds strongly to the 16S ribosomal RNA. The polypeptide is Small ribosomal subunit protein uS19 (Desulforamulus reducens (strain ATCC BAA-1160 / DSM 100696 / MI-1) (Desulfotomaculum reducens)).